We begin with the raw amino-acid sequence, 1050 residues long: Integrin alpha-5 (1050 aa).

The N-terminal stretch at 1–32 (MQLPRGSRVPGLVATFLFPVLCALLTFSSVRG) is a signal peptide. Topologically, residues 33–996 (FNLAVEQPAV…IHWAKPESSY (964 aa)) are extracellular. FG-GAP repeat units follow at residues 34 to 99 (NLAV…GTNC), 116 to 175 (DTPQ…NFTT), 183 to 235 (RTDF…QEAY), 249 to 301 (QTRQ…GTDL), 302 to 367 (RSLY…MEST), 368 to 426 (PHLI…GVDS), and 430 to 493 (QVLQ…ISPN). N-linked (GlcNAc...) asparagine glycans are attached at residues Asn-75, Asn-95, and Asn-98. Disulfide bonds link Cys-90-Cys-99 and Cys-145-Cys-166. Asn-172 carries N-linked (GlcNAc...) asparagine glycosylation. A disulfide bridge connects residues Cys-182 and Cys-195. Positions 270, 272, 274, 276, and 278 each coordinate Ca(2+). N-linked (GlcNAc...) asparagine glycosylation is found at Asn-287, Asn-297, and Asn-306. The Ca(2+) site is built by Asp-324, Asn-326, Asp-328, Leu-330, Asp-332, Asp-390, Asp-392, Asp-394, Asp-398, Asp-454, Asp-456, Asn-458, Tyr-460, and Asp-462. Cys-502 and Cys-513 are disulfide-bonded. Residues Asn-507, Asn-515, Asn-521, and Asn-600 are each glycosylated (N-linked (GlcNAc...) asparagine). A disulfide bridge connects residues Cys-519 and Cys-575. A disulfide bridge connects residues Cys-636 and Cys-642. Residues Asn-649, Asn-714, Asn-763, and Asn-861 are each glycosylated (N-linked (GlcNAc...) asparagine). Cys-708 and Cys-721 are oxidised to a cystine. 3 disulfide bridges follow: Cys-839–Cys-958, Cys-862–Cys-922, and Cys-910–Cys-917. A helical transmembrane segment spans residues 997–1022 (GVPLWIIILAILIGLLLLALLIYVLY). The Cytoplasmic portion of the chain corresponds to 1023–1050 (KLGFFKRSYQYGTAMEKAELKPQAASEA). Positions 1025 to 1029 (GFFKR) match the GFFKR motif motif.

This sequence belongs to the integrin alpha chain family. As to quaternary structure, heterodimer of an alpha and a beta subunit. The alpha subunit is composed of a heavy and a light chain linked by a disulfide bond. Alpha-5 associates with beta-1.

The protein resides in the cell membrane. It is found in the cell junction. Its subcellular location is the focal adhesion. Integrin alpha-5/beta-1 (ITGA5:ITGB1) is a receptor for fibronectin. It recognizes the sequence R-G-D in its ligands. ITGA5:ITGB1 acts as a receptor for fibrillin-1 (FBN1) and mediates R-G-D-dependent cell adhesion to FBN1. ITGA5:ITGB1 acts as a receptor for fibronectin (FN1) and mediates R-G-D-dependent cell adhesion to FN1. ITGA5:ITGB1 is a receptor for IL1B and binding is essential for IL1B signaling. ITGA5:ITGB3 is a receptor for soluble CD40LG and is required for CD40/CD40LG signaling. In Xenopus laevis (African clawed frog), this protein is Integrin alpha-5 (itga5).